Here is a 670-residue protein sequence, read N- to C-terminus: Neutral ceramidase (670 aa).

A signal peptide spans 1-24 (MSRSAFTALLLSCVLLALSMPARA). His61 contacts Mg(2+). Residues Asn84, Gln92, and Asp111 each contribute to the substrate site. His121 provides a ligand contact to Zn(2+). Ser130 is a substrate binding site. Position 228 (His228) interacts with Zn(2+). Residue Ser274 is the Nucleophile of the active site. A disulfide bridge connects residues Cys346 and Cys394. Residue Glu435 coordinates Zn(2+). Tyr469 serves as a coordination point for substrate. A Zn(2+)-binding site is contributed by Tyr472. Mg(2+) is bound by residues Asp603, Asp605, and Thr608. The segment at 644–670 (NAKNFWTQKISEIGGSTRSFEVLGTTP) is required for correct folding and localization.

It belongs to the neutral ceramidase family. Homodimer. Requires Zn(2+) as cofactor. Mg(2+) is required as a cofactor.

Its subcellular location is the secreted. The catalysed reaction is an N-acylsphing-4-enine + H2O = sphing-4-enine + a fatty acid. Inhibited by EDTA, EGTA and D/L-sphinganine D-erythro-sphingosine. L-erythro-sphingosine is a less powerful inhibitor. Stimulated by glycerophospholipids: cardiolipin is the most effective, followed by phosphatidic acid, phosphatidylethanolamine and phosphatidylglycerol, whereas phosphatidylcholine, lysophosphatidic acid and diacylglycerol are less effective. Its function is as follows. Catalyzes the cleavage of the N-acyl linkage of the ceramides (Cers) to yield sphingosine (Sph) and free fatty acid at an optimal pH of 8-9. Also catalyzes the synthesis of Cers from Sph and fatty acid. The polypeptide is Neutral ceramidase (Pseudomonas aeruginosa (strain ATCC 15692 / DSM 22644 / CIP 104116 / JCM 14847 / LMG 12228 / 1C / PRS 101 / PAO1)).